We begin with the raw amino-acid sequence, 190 residues long: 6,7-dimethyl-8-ribityllumazine synthase (190 aa).

5-amino-6-(D-ribitylamino)uracil-binding positions include Phe-23, 61–63 (SFE), and 85–87 (AVI). 90–91 (QT) contributes to the (2S)-2-hydroxy-3-oxobutyl phosphate binding site. Residue His-93 is the Proton donor of the active site. Phe-118 contacts 5-amino-6-(D-ribitylamino)uracil. Position 132 (Arg-132) interacts with (2S)-2-hydroxy-3-oxobutyl phosphate.

This sequence belongs to the DMRL synthase family.

The catalysed reaction is (2S)-2-hydroxy-3-oxobutyl phosphate + 5-amino-6-(D-ribitylamino)uracil = 6,7-dimethyl-8-(1-D-ribityl)lumazine + phosphate + 2 H2O + H(+). It functions in the pathway cofactor biosynthesis; riboflavin biosynthesis; riboflavin from 2-hydroxy-3-oxobutyl phosphate and 5-amino-6-(D-ribitylamino)uracil: step 1/2. Catalyzes the formation of 6,7-dimethyl-8-ribityllumazine by condensation of 5-amino-6-(D-ribitylamino)uracil with 3,4-dihydroxy-2-butanone 4-phosphate. This is the penultimate step in the biosynthesis of riboflavin. This chain is 6,7-dimethyl-8-ribityllumazine synthase, found in Trichormus variabilis (strain ATCC 29413 / PCC 7937) (Anabaena variabilis).